The following is a 216-amino-acid chain: Ribosome maturation factor RimP (216 aa).

It belongs to the RimP family.

It localises to the cytoplasm. In terms of biological role, required for maturation of 30S ribosomal subunits. The sequence is that of Ribosome maturation factor RimP from Bartonella henselae (strain ATCC 49882 / DSM 28221 / CCUG 30454 / Houston 1) (Rochalimaea henselae).